The following is a 124-amino-acid chain: Small ribosomal subunit protein uS12 (124 aa).

Position 89 is a 3-methylthioaspartic acid (aspartate 89).

It belongs to the universal ribosomal protein uS12 family. As to quaternary structure, part of the 30S ribosomal subunit. Contacts proteins S8 and S17. May interact with IF1 in the 30S initiation complex.

With S4 and S5 plays an important role in translational accuracy. In terms of biological role, interacts with and stabilizes bases of the 16S rRNA that are involved in tRNA selection in the A site and with the mRNA backbone. Located at the interface of the 30S and 50S subunits, it traverses the body of the 30S subunit contacting proteins on the other side and probably holding the rRNA structure together. The combined cluster of proteins S8, S12 and S17 appears to hold together the shoulder and platform of the 30S subunit. This is Small ribosomal subunit protein uS12 from Blochmanniella floridana.